The following is a 665-amino-acid chain: mRNA cleavage and polyadenylation factor CLP1 (665 aa).

Residues K91 and 195–200 each bind ATP; that span reads SAGKTS. 2 disordered regions span residues 218–283 and 593–615; these read VKEG…SQAK and PPPR…HDYE. Basic and acidic residues-rich tracts occupy residues 219–238 and 598–614; these read KEGD…EIHP and QSKD…HHDY.

The protein belongs to the Clp1 family. Clp1 subfamily. As to quaternary structure, component of a pre-mRNA cleavage factor complex. Interacts directly with PCF11.

The protein localises to the nucleus. Required for endonucleolytic cleavage during polyadenylation-dependent pre-mRNA 3'-end formation. The polypeptide is mRNA cleavage and polyadenylation factor CLP1 (Malassezia globosa (strain ATCC MYA-4612 / CBS 7966) (Dandruff-associated fungus)).